The primary structure comprises 713 residues: Major surface-labeled trophozoite antigen 417 (713 aa).

Positions 1–17 (MFGRFLLAIVILQLART) are cleaved as a signal peptide. The Extracellular portion of the chain corresponds to 18 to 679 (ACTQEADDGK…KDSGSTNKSG (662 aa)). 2 N-linked (GlcNAc...) asparagine glycosylation sites follow: N289 and N676. Residues 680–708 (LSTGAIAGISVAVIVVVGGLIGFLCWWFL) form a helical membrane-spanning segment. The Cytoplasmic portion of the chain corresponds to 709–713 (CRGKA).

Belongs to the Giardia variant surface protein family.

It localises to the cell membrane. In Giardia intestinalis (Giardia lamblia), this protein is Major surface-labeled trophozoite antigen 417 (TSA 417).